Here is a 313-residue protein sequence, read N- to C-terminus: tRNA dimethylallyltransferase (313 aa).

Residue 14–21 (GPTASGKT) participates in ATP binding. Substrate is bound at residue 16 to 21 (TASGKT). Interaction with substrate tRNA regions lie at residues 39-42 (DSAL) and 163-167 (QRIGR).

Belongs to the IPP transferase family. As to quaternary structure, monomer. The cofactor is Mg(2+).

It carries out the reaction adenosine(37) in tRNA + dimethylallyl diphosphate = N(6)-dimethylallyladenosine(37) in tRNA + diphosphate. Its function is as follows. Catalyzes the transfer of a dimethylallyl group onto the adenine at position 37 in tRNAs that read codons beginning with uridine, leading to the formation of N6-(dimethylallyl)adenosine (i(6)A). This Thiobacillus denitrificans (strain ATCC 25259 / T1) protein is tRNA dimethylallyltransferase.